The primary structure comprises 643 residues: Protein disulfide-isomerase A4 (643 aa).

The first 20 residues, 1–20, serve as a signal peptide directing secretion; the sequence is MKLRKAWLLVLLLALTQLLA. Thioredoxin domains follow at residues 21–167 and 167–299; these read AASA…EVSQ and QPDW…EFLK. Positions 24 to 58 are disordered; the sequence is AEDAHEDASDSENPIEDDDDEEEDEEDEDDLEVKE. Residues 32–56 are compositionally biased toward acidic residues; sequence SDSENPIEDDDDEEEDEEDEDDLEV. Positions 89–92 match the CXXC motif; sequence CGHC. Disulfide bonds link Cys89/Cys92 and Cys204/Cys207. Lys364 carries the N6-acetyllysine modification. The Thioredoxin 3 domain maps to 503-634; the sequence is FKKGKLKPVI…LSKFIDEHAT (132 aa). The CXXC signature appears at 553–556; sequence CGHC. A disulfide bridge connects residues Cys553 and Cys556. The Prevents secretion from ER motif lies at 640–643; that stretch reads KEEL.

The protein belongs to the protein disulfide isomerase family. As to quaternary structure, part of a large chaperone multiprotein complex comprising DNAJB11, HSP90B1, HSPA5, HYOU, PDIA2, PDIA4, PDIA6, PPIB, SDF2L1, UGGT1 and very small amounts of ERP29, but not, or at very low levels, CALR nor CANX. Component of a complex containing at least CRELD2, MANF, MATN3 and PDIA4. In terms of processing, O-glycosylated.

It localises to the endoplasmic reticulum lumen. It is found in the melanosome. The enzyme catalyses Catalyzes the rearrangement of -S-S- bonds in proteins.. This Rattus norvegicus (Rat) protein is Protein disulfide-isomerase A4 (Pdia4).